The following is a 700-amino-acid chain: MANKREFPLDRTRNIGIMAHIDAGKTTTTERILYYTGKIHKIGETHEGASQMDWMPQEQERGITITSAATTAFWKDHRVNIIDTPGHVDFTIEVERSLRVLDGAITVLDAQSGVEPQTENVWRQATTYGVPRLVFVNKMDKIGADFDYSMTTLHDRLQANAHAVQMPIGAEDKFEGVIDLIEMKADLYDEDELGTKWDTVDVPDDYKEAAQKAHNDLIEAVADVDDGIMDKYLEGEEISNAELKAAIRKATINLEFYPVLAGSAFKNKGVQMLLDAVIDYLPSPLDVRPYHATDPDTGDAVELTAGDDKPFAALAFKVATDPFVGRLTYIRVYSGTLEAGSYVLNATKDNRERVGRLLQMHSNHREEIPEVFSGDIAAAIGLKNTTTGDSLTDVDHPLILESLDVPDPVIQVSIEPDSKEDQDKLDVGLQKLSEEDPTFKAETSPETGETLIAGMGELHLDIMVDRLKREFKVAAKVGEPQVAYRETFTKETSAQGKFVRQSGGKGQYGDVWIEFSPNEEGKGFEFENAIVGGVVPREYIPAVEQGLKEAMANGVLAGYPLIDVKAKLYDGSYHEVDSSEAAFKVAASMALKNASKSAGAVILEPIMHVEVVAPEEYLGDVMGQITARRGRVEGMEARGNAQLVNSMVPLAEMFGYATTLRSATQGRGTFTMTFDHYEAVPKSIQAEIIKKNGGGVATKD.

The region spanning 10 to 285 is the tr-type G domain; that stretch reads DRTRNIGIMA…AVIDYLPSPL (276 aa). GTP contacts are provided by residues 19-26, 83-87, and 137-140; these read AHIDAGKT, DTPGH, and NKMD.

The protein belongs to the TRAFAC class translation factor GTPase superfamily. Classic translation factor GTPase family. EF-G/EF-2 subfamily.

Its subcellular location is the cytoplasm. In terms of biological role, catalyzes the GTP-dependent ribosomal translocation step during translation elongation. During this step, the ribosome changes from the pre-translocational (PRE) to the post-translocational (POST) state as the newly formed A-site-bound peptidyl-tRNA and P-site-bound deacylated tRNA move to the P and E sites, respectively. Catalyzes the coordinated movement of the two tRNA molecules, the mRNA and conformational changes in the ribosome. This Lacticaseibacillus paracasei (strain ATCC 334 / BCRC 17002 / CCUG 31169 / CIP 107868 / KCTC 3260 / NRRL B-441) (Lactobacillus paracasei) protein is Elongation factor G.